Here is a 187-residue protein sequence, read N- to C-terminus: Adenylate kinase (187 aa).

Position 10–15 (10–15) interacts with ATP; the sequence is GSGKGT. The NMP stretch occupies residues 30–59; the sequence is STGDLLRAEVAAGSPLGVKAKEVMARGDLV. AMP is bound by residues Thr-31, Arg-36, 57-59, 85-88, and Gln-92; these read DLV and GYPR. The segment at 126-136 is LID; sequence GRAKAEGREDD. Arg-127 provides a ligand contact to ATP. Arg-133 and Arg-144 together coordinate AMP. Gly-172 serves as a coordination point for ATP.

Belongs to the adenylate kinase family. Monomer.

Its subcellular location is the cytoplasm. The enzyme catalyses AMP + ATP = 2 ADP. It functions in the pathway purine metabolism; AMP biosynthesis via salvage pathway; AMP from ADP: step 1/1. In terms of biological role, catalyzes the reversible transfer of the terminal phosphate group between ATP and AMP. Plays an important role in cellular energy homeostasis and in adenine nucleotide metabolism. This is Adenylate kinase from Xanthomonas campestris pv. campestris (strain B100).